A 208-amino-acid chain; its full sequence is Outer-membrane lipoprotein carrier protein (208 aa).

The signal sequence occupies residues 1–22 (MRKTLSILAISLPLLVSGYAQA).

This sequence belongs to the LolA family. Monomer.

The protein resides in the periplasm. In terms of biological role, participates in the translocation of lipoproteins from the inner membrane to the outer membrane. Only forms a complex with a lipoprotein if the residue after the N-terminal Cys is not an aspartate (The Asp acts as a targeting signal to indicate that the lipoprotein should stay in the inner membrane). This chain is Outer-membrane lipoprotein carrier protein, found in Shewanella sediminis (strain HAW-EB3).